Reading from the N-terminus, the 152-residue chain is Bacchus (152 aa).

Over residues 29–41 the composition is skewed to basic and acidic residues; the sequence is DLKAKAAAEDKAA. A disordered region spans residues 29–152; the sequence is DLKAKAAAED…DDGSGSDDQA (124 aa). Over residues 42-51 the composition is skewed to low complexity; the sequence is AADAAGDAAD. Over residues 72–89 the composition is skewed to basic and acidic residues; sequence ESVKGTKRPAEAKSAESK. A compositionally biased stretch (acidic residues) spans 99-152; sequence GDSDEEEALEEIIEGDSEIESDEYDIPYDGEEDDIECDDDDDDNDDGSGSDDQA.

As to expression, expressed in the brain.

The protein localises to the nucleus. Negatively regulates tyramine beta-hydroxylase tbh and thus the conversion of tyramine (TA) to octopamine (OA). In tyrosine decarboxylase 2 (Tdc2) neurons, acts in an amine-mediated signaling pathway to negatively regulate acute ethanol sensitivity probably via tbh-mediated depletion of TA. The sequence is that of Bacchus from Drosophila melanogaster (Fruit fly).